The primary structure comprises 541 residues: Peptidyl-prolyl isomerase cwc-27 (541 aa).

One can recognise a PPIase cyclophilin-type domain in the interval 11–193 (PTASAIIHTT…YPIKITRIEI (183 aa)). Disordered stretches follow at residues 199 to 443 (DDMQ…GQAD) and 513 to 541 (TLKEEKKATRDAKTGGSSRAWDRGRRDRH). Composition is skewed to basic and acidic residues over residues 279-307 (AKRDAKPVANDVPKREEKPEPKPVKESRR), 316-348 (QKKEQPPKKHYSEHSSPEPEEPKKKSLLEKTNE), and 361-374 (IHSEPVKQEKKKSA). Residues 432 to 442 (DVEDGEQDGQA) are compositionally biased toward acidic residues. 2 stretches are compositionally biased toward basic and acidic residues: residues 513–525 (TLKEEKKATRDAK) and 532–541 (AWDRGRRDRH).

The protein belongs to the cyclophilin-type PPIase family. CWC27 subfamily. Associated with the spliceosome.

The protein localises to the cytoplasm. It localises to the nucleus. It catalyses the reaction [protein]-peptidylproline (omega=180) = [protein]-peptidylproline (omega=0). Functionally, PPIases accelerate the folding of proteins. It catalyzes the cis-trans isomerization of proline imidic peptide bonds in oligopeptides. Involved in pre-mRNA splicing. This chain is Peptidyl-prolyl isomerase cwc-27 (cwc-27), found in Neurospora crassa (strain ATCC 24698 / 74-OR23-1A / CBS 708.71 / DSM 1257 / FGSC 987).